The chain runs to 214 residues: MNLILFGPPGAGKGTQAQFLVETYGIPQISTGDMLRAAVKAGTPLGVKAQEIMIQGGLVSDDIVLGIVAERLAQDDCAAGFVLDGFPRTIPQADALSVILKQVGRAIDHVISLEVDGEEIVNRLSGRRSCSSCGKGYHLVFDPPLRAGVCDVCGSGLVQRADDQEETVRNRLLVYEQQTAPLKDYYRSRQVLCSIPGIGSIVEIQQRIAAALVE.

An ATP-binding site is contributed by 10–15 (GAGKGT). Residues 30 to 59 (STGDMLRAAVKAGTPLGVKAQEIMIQGGLV) are NMP. AMP contacts are provided by residues T31, R36, 57-59 (GLV), 85-88 (GFPR), and Q92. The interval 126-163 (GRRSCSSCGKGYHLVFDPPLRAGVCDVCGSGLVQRADD) is LID. An ATP-binding site is contributed by R127. Positions 130, 133, 150, and 153 each coordinate Zn(2+). Residues R160 and R171 each coordinate AMP. G199 is an ATP binding site.

The protein belongs to the adenylate kinase family. As to quaternary structure, monomer.

It localises to the cytoplasm. It carries out the reaction AMP + ATP = 2 ADP. The protein operates within purine metabolism; AMP biosynthesis via salvage pathway; AMP from ADP: step 1/1. Catalyzes the reversible transfer of the terminal phosphate group between ATP and AMP. Plays an important role in cellular energy homeostasis and in adenine nucleotide metabolism. In Trichlorobacter lovleyi (strain ATCC BAA-1151 / DSM 17278 / SZ) (Geobacter lovleyi), this protein is Adenylate kinase.